We begin with the raw amino-acid sequence, 235 residues long: MTINLDKIKIPDDWKQLLASEFLSPYFADIKTHYLNALQNKEMIYPKPHQIFAAFNLTPLSSLKVVILGQDPYHGSGIIEGVETPQAMGLSFSVPRGMPIPPSLKNIYAELSQSLHITPPTHGDLSGWARQGVLLLNAILSVRANAPASHKHFGWEYFSDGVIRALSAHKEHLVFMLWGNYAKKKAPLIDASKHKIITAPHPSPLARGFVGSNVFLQANIYLQEHAKEPIAWEKL.

The Proton acceptor role is filled by Asp71.

It belongs to the uracil-DNA glycosylase (UDG) superfamily. UNG family.

Its subcellular location is the cytoplasm. It carries out the reaction Hydrolyzes single-stranded DNA or mismatched double-stranded DNA and polynucleotides, releasing free uracil.. Excises uracil residues from the DNA which can arise as a result of misincorporation of dUMP residues by DNA polymerase or due to deamination of cytosine. The sequence is that of Uracil-DNA glycosylase from Helicobacter hepaticus (strain ATCC 51449 / 3B1).